Here is a 241-residue protein sequence, read N- to C-terminus: Megakaryocyte and platelet inhibitory receptor G6b (241 aa).

Positions 1–17 (MAVFLQLLPLLLSRAQG) are cleaved as a signal peptide. At 18–142 (NPGASLDGRP…GPTHGSVYPQ (125 aa)) the chain is on the extracellular side. Asn32 carries an N-linked (GlcNAc...) asparagine glycan. Residues 143-163 (LLIPLLGAGLVLGLGALGLVW) form a helical membrane-spanning segment. At 164 to 241 (WLHRRLPPQP…DASTIYAVVV (78 aa)) the chain is on the cytoplasmic side. 2 short sequence motifs (ITIM motif) span residues 209–214 (LLYADL) and 235–240 (TIYAVV). Residue Tyr211 is modified to Phosphotyrosine.

In terms of assembly, interacts (via ITIM motif) with PTPN6 and PTPN11. Binds to heparin. All isoforms are N-glycosylated. Post-translationally, isoform E is O-glycosylated. In terms of processing, phosphorylated. Expressed in platelets. Expressed in a restricted set of hematopoietic cell lines including the erythroleukemia cell line K-562 and the T-cell leukemia cell lines MOLT-4 and Jurkat. Not detected in the monocyte-like cell line U-937, the B-cell-like cell line Raji, the fibroblast cell lines TK and HeLa, or the natural killer cell lines NKL, NK 62 and YT.

It is found in the endoplasmic reticulum. The protein localises to the golgi apparatus. The protein resides in the cell membrane. Inhibitory receptor that acts as a critical regulator of hematopoietic lineage differentiation, megakaryocyte function and platelet production. Inhibits platelet aggregation and activation by agonists such as ADP and collagen-related peptide. This regulation of megakaryocate function as well as platelet production ann activation is done through the inhibition (via the 2 ITIM motifs) of the receptors CLEC1B and GP6:FcRgamma signaling. Appears to operate in a calcium-independent manner. Functionally, isoform B, displayed in this entry, is the only isoform to contain both a transmembrane region and 2 immunoreceptor tyrosine-based inhibitor motifs (ITIMs) and, thus, the only one which probably has a role of inhibitory receptor. Isoform A may be the activating counterpart of isoform B. The polypeptide is Megakaryocyte and platelet inhibitory receptor G6b (Homo sapiens (Human)).